The chain runs to 516 residues: Glucose-1-phosphate adenylyltransferase large subunit 1, chloroplastic/amyloplastic (516 aa).

A chloroplast-targeting transit peptide spans 1-45 (MQFALALDTNSGPHQIRSCEGDGIDRLEKLSIGGRKQEKALRNRC).

It belongs to the bacterial/plant glucose-1-phosphate adenylyltransferase family. As to quaternary structure, heterotetramer. In terms of tissue distribution, endosperm.

The protein resides in the plastid. It localises to the chloroplast. It is found in the amyloplast. It catalyses the reaction alpha-D-glucose 1-phosphate + ATP + H(+) = ADP-alpha-D-glucose + diphosphate. The protein operates within glycan biosynthesis; starch biosynthesis. Activated by 3'phosphoglycerate, inhibited by orthophosphate. Allosteric regulation. Functionally, this protein plays a role in synthesis of starch. It catalyzes the synthesis of the activated glycosyl donor, ADP-glucose from Glc-1-P and ATP. The sequence is that of Glucose-1-phosphate adenylyltransferase large subunit 1, chloroplastic/amyloplastic (SH2) from Zea mays (Maize).